The chain runs to 468 residues: 6-phosphogluconate dehydrogenase, decarboxylating (468 aa).

NADP(+) contacts are provided by residues 9-14, 32-34, 73-75, and asparagine 101; these read GLAVMG, NRS, and VQA. Substrate contacts are provided by residues asparagine 101 and 127–129; that span reads SGG. The Proton acceptor role is filled by lysine 182. 185–186 is a substrate binding site; sequence HN. Glutamate 189 (proton donor) is an active-site residue. Substrate-binding residues include tyrosine 190, lysine 259, arginine 286, arginine 444, and histidine 450.

Belongs to the 6-phosphogluconate dehydrogenase family. In terms of assembly, homodimer.

It carries out the reaction 6-phospho-D-gluconate + NADP(+) = D-ribulose 5-phosphate + CO2 + NADPH. Its pathway is carbohydrate degradation; pentose phosphate pathway; D-ribulose 5-phosphate from D-glucose 6-phosphate (oxidative stage): step 3/3. Its function is as follows. Catalyzes the oxidative decarboxylation of 6-phosphogluconate to ribulose 5-phosphate and CO(2), with concomitant reduction of NADP to NADPH. This is 6-phosphogluconate dehydrogenase, decarboxylating (gnd) from Staphylococcus aureus (strain COL).